The primary structure comprises 500 residues: Replication factor C large subunit (500 aa).

Position 44-51 (44-51 (GSPGVGKT)) interacts with ATP. A disordered region spans residues 443-500 (HAADDLGASDGETTNASGTASSSGDDGDADGTTDGDGSDANDGNDDDDDGQAGLSDFV). The segment covering 455 to 466 (TTNASGTASSSG) has biased composition (low complexity). A compositionally biased stretch (acidic residues) spans 467-492 (DDGDADGTTDGDGSDANDGNDDDDDG).

The protein belongs to the activator 1 small subunits family. RfcL subfamily. As to quaternary structure, heteromultimer composed of small subunits (RfcS) and large subunits (RfcL).

Functionally, part of the RFC clamp loader complex which loads the PCNA sliding clamp onto DNA. This Halorubrum lacusprofundi (strain ATCC 49239 / DSM 5036 / JCM 8891 / ACAM 34) protein is Replication factor C large subunit.